We begin with the raw amino-acid sequence, 187 residues long: Protein GrpE (187 aa).

The tract at residues 1 to 26 (MHDPKESLETNIQETESQEKLPETPI) is disordered.

It belongs to the GrpE family. Homodimer.

It is found in the cytoplasm. Functionally, participates actively in the response to hyperosmotic and heat shock by preventing the aggregation of stress-denatured proteins, in association with DnaK and GrpE. It is the nucleotide exchange factor for DnaK and may function as a thermosensor. Unfolded proteins bind initially to DnaJ; upon interaction with the DnaJ-bound protein, DnaK hydrolyzes its bound ATP, resulting in the formation of a stable complex. GrpE releases ADP from DnaK; ATP binding to DnaK triggers the release of the substrate protein, thus completing the reaction cycle. Several rounds of ATP-dependent interactions between DnaJ, DnaK and GrpE are required for fully efficient folding. The polypeptide is Protein GrpE (Dichelobacter nodosus (strain VCS1703A)).